Here is a 137-residue protein sequence, read N- to C-terminus: uncharacterized protein (137 aa).

Transmembrane regions (helical) follow at residues 4–26 (AIILGLLVAVFYGVGTFFAKIVC), 35–57 (IVVNIVGIILCLIILLKYKNIII), 62–84 (ILTYAIISAVLVVIGSLLLYYAL), 89–111 (ASIVVPLSSIGPAITVALSILFL), and 116–135 (TLPQMIGIVLIIIGIILLSI). The EamA domain maps to 13 to 135 (VFYGVGTFFA…IIIGIILLSI (123 aa)).

The protein resides in the cell membrane. This is an uncharacterized protein from Methanocaldococcus jannaschii (strain ATCC 43067 / DSM 2661 / JAL-1 / JCM 10045 / NBRC 100440) (Methanococcus jannaschii).